Here is a 695-residue protein sequence, read N- to C-terminus: Elongation factor G (695 aa).

One can recognise a tr-type G domain in the interval 8 to 282 (EKTRNIGIMA…AVLDYLPAPT (275 aa)). GTP is bound by residues 17–24 (AHIDAGKT), 81–85 (DTPGH), and 135–138 (NKMD).

The protein belongs to the TRAFAC class translation factor GTPase superfamily. Classic translation factor GTPase family. EF-G/EF-2 subfamily.

It localises to the cytoplasm. Its function is as follows. Catalyzes the GTP-dependent ribosomal translocation step during translation elongation. During this step, the ribosome changes from the pre-translocational (PRE) to the post-translocational (POST) state as the newly formed A-site-bound peptidyl-tRNA and P-site-bound deacylated tRNA move to the P and E sites, respectively. Catalyzes the coordinated movement of the two tRNA molecules, the mRNA and conformational changes in the ribosome. This Listeria innocua serovar 6a (strain ATCC BAA-680 / CLIP 11262) protein is Elongation factor G.